The chain runs to 1263 residues: Multidrug resistance protein sirA (1263 aa).

The interval 1-21 is disordered; that stretch reads MAEPESEKPSSAQGGGLPSSD. 4 helical membrane-spanning segments follow: residues 57–77, 104–124, 179–199, and 206–226; these read LISA…ILFI, IALY…IFTN, KIGL…IGFV, and FILT…SGFM. The ABC transmembrane type-1 1 domain maps to 57–347; that stretch reads LISAFFAAVS…VGPHLQAMSL (291 aa). N232 carries N-linked (GlcNAc...) asparagine glycosylation. Transmembrane regions (helical) follow at residues 284–304 and 318–338; these read VMGW…GLAI and VGAI…FGNV. The region spanning 380 to 625 is the ABC transporter 1 domain; it reads IEFRNVSHVY…EGLYQTFVRR (246 aa). Residue N384 is glycosylated (N-linked (GlcNAc...) asparagine). Residue 415–422 coordinates ATP; sequence GASGSGKS. N-linked (GlcNAc...) asparagine glycosylation occurs at N469. A disordered region spans residues 635–672; sequence PPHARITPAVDTPASPQHRLSEKTGSIYGQGESEAADK. A run of 6 helical transmembrane segments spans residues 699-719, 740-760, 817-839, 843-865, 930-950, and 960-980; these read VTGI…SVFF, FWAA…GVQG, VFLG…SLAV, LTLV…LKLV, LSEA…ATLV, and FFIV…VFAF. The 288-residue stretch at 699 to 986 folds into the ABC transmembrane type-1 2 domain; sequence VTGIASAVIS…VFAFAPDFGK (288 aa). In terms of domain architecture, ABC transporter 2 spans 1021–1259; it reads VDVSNVVFYY…RGSYYDSVNL (239 aa). Position 1056–1063 (1056–1063) interacts with ATP; it reads GGSGSGKS.

It belongs to the ABC transporter superfamily. ABCB family. Multidrug resistance exporter (TC 3.A.1.201) subfamily.

It is found in the cell membrane. The enzyme catalyses ATP + H2O + xenobioticSide 1 = ADP + phosphate + xenobioticSide 2.. Sirodesmin transporter that provides the dual role of sirodesmin export and self-protection. Also provides tolerance to gliotoxin. The polypeptide is Multidrug resistance protein sirA (Leptosphaeria maculans (Blackleg fungus)).